We begin with the raw amino-acid sequence, 75 residues long: Putative membrane protein insertion efficiency factor (75 aa).

Belongs to the UPF0161 family.

The protein localises to the cell inner membrane. In terms of biological role, could be involved in insertion of integral membrane proteins into the membrane. This chain is Putative membrane protein insertion efficiency factor, found in Gloeothece citriformis (strain PCC 7424) (Cyanothece sp. (strain PCC 7424)).